Consider the following 301-residue polypeptide: tRNA pseudouridine synthase B (301 aa).

Residue Asp-38 is the Nucleophile of the active site.

This sequence belongs to the pseudouridine synthase TruB family. Type 1 subfamily.

It carries out the reaction uridine(55) in tRNA = pseudouridine(55) in tRNA. Its function is as follows. Responsible for synthesis of pseudouridine from uracil-55 in the psi GC loop of transfer RNAs. The sequence is that of tRNA pseudouridine synthase B from Lacticaseibacillus paracasei (strain ATCC 334 / BCRC 17002 / CCUG 31169 / CIP 107868 / KCTC 3260 / NRRL B-441) (Lactobacillus paracasei).